Here is a 385-residue protein sequence, read N- to C-terminus: Acetylornithine deacetylase (385 aa).

Histidine 80 contributes to the Zn(2+) binding site. Aspartate 82 is a catalytic residue. Position 112 (aspartate 112) interacts with Zn(2+). Glutamate 144 (proton acceptor) is an active-site residue. 3 residues coordinate Zn(2+): glutamate 145, glutamate 169, and histidine 355.

This sequence belongs to the peptidase M20A family. ArgE subfamily. As to quaternary structure, homodimer. Requires Zn(2+) as cofactor. It depends on Co(2+) as a cofactor. Glutathione serves as cofactor.

The protein resides in the cytoplasm. It catalyses the reaction N(2)-acetyl-L-ornithine + H2O = L-ornithine + acetate. Its pathway is amino-acid biosynthesis; L-arginine biosynthesis; L-ornithine from N(2)-acetyl-L-ornithine (linear): step 1/1. Catalyzes the hydrolysis of the amide bond of N(2)-acetylated L-amino acids. Cleaves the acetyl group from N-acetyl-L-ornithine to form L-ornithine, an intermediate in L-arginine biosynthesis pathway, and a branchpoint in the synthesis of polyamines. The polypeptide is Acetylornithine deacetylase (Photorhabdus laumondii subsp. laumondii (strain DSM 15139 / CIP 105565 / TT01) (Photorhabdus luminescens subsp. laumondii)).